We begin with the raw amino-acid sequence, 296 residues long: Elongation factor Ts (296 aa).

Residues 82–85 (TDFV) are involved in Mg(2+) ion dislocation from EF-Tu.

This sequence belongs to the EF-Ts family.

It is found in the cytoplasm. Associates with the EF-Tu.GDP complex and induces the exchange of GDP to GTP. It remains bound to the aminoacyl-tRNA.EF-Tu.GTP complex up to the GTP hydrolysis stage on the ribosome. The protein is Elongation factor Ts of Coxiella burnetii (strain CbuG_Q212) (Coxiella burnetii (strain Q212)).